The following is an 833-amino-acid chain: Ventricular zone-expressed PH domain-containing protein 1 (833 aa).

2 interaction with TGFBR1 regions span residues 201-319 (AELL…LANM) and 663-833 (ESTF…TTYL). The 104-residue stretch at 716-819 (QPLIEGKLKE…WLQCINVALA (104 aa)) folds into the PH domain.

It belongs to the MELT/VEPH family. As to quaternary structure, interacts with TGFBR1. Specifically expressed in kidney and eye. In the eye, expressed in retinal pigmented epithelium but not in the neural retina.

It is found in the cell membrane. In terms of biological role, interacts with TGF-beta receptor type-1 (TGFBR1) and inhibits dissociation of activated SMAD2 from TGFBR1, impeding its nuclear accumulation and resulting in impaired TGF-beta signaling. May also affect FOXO, Hippo and Wnt signaling. The chain is Ventricular zone-expressed PH domain-containing protein 1 (Veph1) from Mus musculus (Mouse).